The following is a 115-amino-acid chain: Large ribosomal subunit protein bL19 (115 aa).

It belongs to the bacterial ribosomal protein bL19 family.

Functionally, this protein is located at the 30S-50S ribosomal subunit interface and may play a role in the structure and function of the aminoacyl-tRNA binding site. This is Large ribosomal subunit protein bL19 from Thermosipho melanesiensis (strain DSM 12029 / CIP 104789 / BI429).